We begin with the raw amino-acid sequence, 127 residues long: DNA-directed RNA polymerase subunit omega (127 aa).

This sequence belongs to the RNA polymerase subunit omega family. As to quaternary structure, the RNAP catalytic core consists of 2 alpha, 1 beta, 1 beta' and 1 omega subunit. When a sigma factor is associated with the core the holoenzyme is formed, which can initiate transcription.

It carries out the reaction RNA(n) + a ribonucleoside 5'-triphosphate = RNA(n+1) + diphosphate. Functionally, promotes RNA polymerase assembly. Latches the N- and C-terminal regions of the beta' subunit thereby facilitating its interaction with the beta and alpha subunits. The sequence is that of DNA-directed RNA polymerase subunit omega from Rickettsia typhi (strain ATCC VR-144 / Wilmington).